The primary structure comprises 249 residues: Probable hydroxyacylglutathione hydrolase ECU02_0580 (249 aa).

7 residues coordinate Zn(2+): His-75, His-77, Asp-79, His-80, His-126, Asp-144, and His-183. Substrate-binding positions include His-183 to Tyr-185 and Arg-240 to Lys-243.

Belongs to the metallo-beta-lactamase superfamily. Glyoxalase II family. Requires Zn(2+) as cofactor.

Its subcellular location is the cytoplasm. The protein localises to the nucleus. The catalysed reaction is an S-(2-hydroxyacyl)glutathione + H2O = a 2-hydroxy carboxylate + glutathione + H(+). The protein operates within secondary metabolite metabolism; methylglyoxal degradation; (R)-lactate from methylglyoxal: step 2/2. In terms of biological role, thiolesterase that catalyzes the hydrolysis of S-D-lactoyl-glutathione to form glutathione and D-lactic acid. This is Probable hydroxyacylglutathione hydrolase ECU02_0580 from Encephalitozoon cuniculi (strain GB-M1) (Microsporidian parasite).